Here is a 192-residue protein sequence, read N- to C-terminus: 4'-phosphopantetheinyl transferase AcpT (192 aa).

It belongs to the P-Pant transferase superfamily. Gsp/Sfp/HetI/AcpT family.

The enzyme catalyses apo-[ACP] + CoA = holo-[ACP] + adenosine 3',5'-bisphosphate + H(+). Functionally, may be involved in an alternative pathway for phosphopantetheinyl transfer and holo-ACP synthesis. The native apo-protein substrate is unknown. The sequence is that of 4'-phosphopantetheinyl transferase AcpT (acpT) from Salmonella typhi.